The sequence spans 428 residues: C4-dicarboxylate transport protein (428 aa).

Transmembrane regions (helical) follow at residues Ser-8–Pro-28, Leu-44–Met-64, Val-76–Val-96, Ile-142–Phe-162, Val-184–Met-204, Leu-222–Ala-242, Ile-326–Val-346, and Ile-352–Ile-372.

This sequence belongs to the dicarboxylate/amino acid:cation symporter (DAACS) (TC 2.A.23) family.

The protein resides in the cell inner membrane. Functionally, responsible for the transport of dicarboxylates such as succinate, fumarate, and malate from the periplasm across the membrane. The polypeptide is C4-dicarboxylate transport protein (Escherichia coli O127:H6 (strain E2348/69 / EPEC)).